Reading from the N-terminus, the 316-residue chain is MST50-interacting protein 11 (316 aa).

WD repeat units lie at residues 13–53 (GHNG…TSYG), 61–100 (GHSH…TTRR), 103–142 (GHTN…KYTI), 146–187 (GHSE…LQTD), 190–229 (GHTG…HLYS), 231–269 (NAND…KVDE), and 281–316 (SREP…MSRA).

It belongs to the WD repeat G protein beta family. Ribosomal protein RACK1 subfamily. Interacts with MST50 and MCK1.

Functionally, involved in regulating the cell wall integrity and MPS1 activation via its interaction with the MAPKKK MCK1. This Pyricularia oryzae (strain 70-15 / ATCC MYA-4617 / FGSC 8958) (Rice blast fungus) protein is MST50-interacting protein 11.